Here is a 231-residue protein sequence, read N- to C-terminus: Phosphoglycolate phosphatase (231 aa).

Asp-9 serves as the catalytic Nucleophile. Mg(2+) contacts are provided by Asp-9 and Asp-11. Residue Lys-154 participates in substrate binding. Positions 177 and 181 each coordinate Mg(2+).

It belongs to the archaeal SPP-like hydrolase family. Mg(2+) is required as a cofactor.

It catalyses the reaction 2-phosphoglycolate + H2O = glycolate + phosphate. In terms of biological role, catalyzes the dephosphorylation of 2-phosphoglycolate. The chain is Phosphoglycolate phosphatase from Nitrosopumilus maritimus (strain SCM1).